The sequence spans 311 residues: Malate dehydrogenase (311 aa).

Residues 7–13 (GAAGGIG) and Asp34 each bind NAD(+). The substrate site is built by Arg81 and Arg87. NAD(+) is bound by residues Asn94 and 117 to 119 (ITN). Residues Asn119 and Arg153 each contribute to the substrate site. His177 acts as the Proton acceptor in catalysis. Met227 contacts NAD(+).

This sequence belongs to the LDH/MDH superfamily. MDH type 1 family. In terms of assembly, homodimer.

The catalysed reaction is (S)-malate + NAD(+) = oxaloacetate + NADH + H(+). Functionally, catalyzes the reversible oxidation of malate to oxaloacetate. This Haemophilus influenzae (strain PittEE) protein is Malate dehydrogenase.